Reading from the N-terminus, the 120-residue chain is Large ribosomal subunit protein bL17 (120 aa).

The protein belongs to the bacterial ribosomal protein bL17 family. Part of the 50S ribosomal subunit. Contacts protein L32.

The sequence is that of Large ribosomal subunit protein bL17 from Mycoplasmopsis pulmonis (strain UAB CTIP) (Mycoplasma pulmonis).